Reading from the N-terminus, the 197-residue chain is uncharacterized protein (197 aa).

The signal sequence occupies residues 1–30 (MSTYIIINIALLIAIVALIFFLSKKTKSEA).

This is an uncharacterized protein from Acanthamoeba polyphaga (Amoeba).